The chain runs to 211 residues: MSTTTVPELKQISREEAMRLGPGWSHSCHAMLYAANPGQLFGRIPMRFSVLMQMRFDGLLGFPGGFVDRRFWSLEDGLNRVLGLGLGGLRLTEADYLSSHLTEGPHRVVAHLYARQLTLEQLHAVEISAVHSRDHGLEVLGLVRVPLYTQKDRVGGFPNFLSNAFVSTAKYQLLFALKVLNMMPSEKLAEALASATEKQKKALEKLLPPSS.

Glycyl lysine isopeptide (Lys-Gly) (interchain with G-Cter in ubiquitin) cross-links involve residues Lys10 and Lys151. The segment at 118–205 (TLEQLHAVEI…TEKQKKALEK (88 aa)) is interaction with PXN.

It belongs to the Nudix hydrolase family. TIRR subfamily. Homodimer. Interacts with TP53BP1 (via the Tudor-like domain); interaction is abolished following DNA damage and TP53BP1 phosphorylation by ATM. Interacts (via the cytoplasmic part) with SDC4. Interacts with TGFB1I1 and PXN.

The protein localises to the nucleus. Its function is as follows. Key regulator of TP53BP1 required to stabilize TP53BP1 and regulate its recruitment to chromatin. In absence of DNA damage, interacts with the tandem Tudor-like domain of TP53BP1, masking the region that binds histone H4 dimethylated at 'Lys-20' (H4K20me2), thereby preventing TP53BP1 recruitment to chromatin and maintaining TP53BP1 localization to the nucleus. Following DNA damage, ATM-induced phosphorylation of TP53BP1 and subsequent recruitment of RIF1 leads to dissociate NUDT16L1/TIRR from TP53BP1, unmasking the tandem Tudor-like domain and allowing recruitment of TP53BP1 to DNA double strand breaks (DSBs). Binds U8 snoRNA. The polypeptide is Tudor-interacting repair regulator protein (Mus musculus (Mouse)).